Here is a 134-residue protein sequence, read N- to C-terminus: ATP synthase epsilon chain (134 aa).

The protein belongs to the ATPase epsilon chain family. F-type ATPases have 2 components, CF(1) - the catalytic core - and CF(0) - the membrane proton channel. CF(1) has five subunits: alpha(3), beta(3), gamma(1), delta(1), epsilon(1). CF(0) has three main subunits: a, b and c.

The protein localises to the cell membrane. Its function is as follows. Produces ATP from ADP in the presence of a proton gradient across the membrane. This is ATP synthase epsilon chain from Carboxydothermus hydrogenoformans (strain ATCC BAA-161 / DSM 6008 / Z-2901).